The primary structure comprises 101 residues: Small ribosomal subunit protein uS10 (101 aa).

Belongs to the universal ribosomal protein uS10 family. Part of the 30S ribosomal subunit.

Its function is as follows. Involved in the binding of tRNA to the ribosomes. The chain is Small ribosomal subunit protein uS10 from Mycobacterium leprae (strain Br4923).